The sequence spans 171 residues: Co-chaperone protein HscB (171 aa).

In terms of domain architecture, J spans 2 to 74; sequence DYFTLFGLPA…LARAEYLLSL (73 aa).

It belongs to the HscB family. As to quaternary structure, interacts with HscA and stimulates its ATPase activity. Interacts with IscU.

Its function is as follows. Co-chaperone involved in the maturation of iron-sulfur cluster-containing proteins. Seems to help targeting proteins to be folded toward HscA. The protein is Co-chaperone protein HscB of Enterobacter sp. (strain 638).